A 325-amino-acid chain; its full sequence is Thiamine-monophosphate kinase (325 aa).

The Mg(2+) site is built by D27 and D44. H51 serves as a coordination point for substrate. A Mg(2+)-binding site is contributed by D73. Residues Y103, 120–121, and R147 each bind ATP; that span reads GD. D121 contacts Mg(2+). D215 lines the Mg(2+) pocket. S217 provides a ligand contact to ATP. Mg(2+) is bound at residue D218. E264 and Y321 together coordinate substrate.

This sequence belongs to the thiamine-monophosphate kinase family.

It catalyses the reaction thiamine phosphate + ATP = thiamine diphosphate + ADP. It participates in cofactor biosynthesis; thiamine diphosphate biosynthesis; thiamine diphosphate from thiamine phosphate: step 1/1. Functionally, catalyzes the ATP-dependent phosphorylation of thiamine-monophosphate (TMP) to form thiamine-pyrophosphate (TPP), the active form of vitamin B1. The sequence is that of Thiamine-monophosphate kinase from Bacillus subtilis (strain 168).